Consider the following 655-residue polypeptide: MRVFFFPNSSMAILSVFLSLLLLSLPLPSTQDLNADRTALLSLRSAVGGRTFRWNIKQTSPCNWAGVKCESNRVTALRLPGVALSGDIPEGIFGNLTQLRTLSLRLNALSGSLPKDLSTSSNLRHLYLQGNRFSGEIPEVLFSLSHLVRLNLASNSFTGEISSGFTNLTKLKTLFLENNQLSGSIPDLDLPLVQFNVSNNSLNGSIPKNLQRFESDSFLQTSLCGKPLKLCPDEETVPSQPTSGGNRTPPSVEGSEEKKKKNKLSGGAIAGIVIGCVVGFALIVLILMVLCRKKSNKRSRAVDISTIKQQEPEIPGDKEAVDNGNVYSVSAAAAAAMTGNGKASEGNGPATKKLVFFGNATKVFDLEDLLRASAEVLGKGTFGTAYKAVLDAVTVVAVKRLKDVMMADKEFKEKIELVGAMDHENLVPLRAYYFSRDEKLLVYDFMPMGSLSALLHGNRGAGRSPLNWDVRSRIAIGAARGLDYLHSQGTSTSHGNIKSSNILLTKSHDAKVSDFGLAQLVGSSATNPNRATGYRAPEVTDPKRVSQKGDVYSFGVVLLELITGKAPSNSVMNEEGVDLPRWVKSVARDEWRREVFDSELLSLATDEEEMMAEMVQLGLECTSQHPDQRPEMSEVVRKMENLRPYSGSDQVNEAD.

The signal sequence occupies residues 1-32 (MRVFFFPNSSMAILSVFLSLLLLSLPLPSTQD). 6 LRR repeats span residues 71–95 (SNRV…IFGN), 98–120 (QLRT…LSTS), 122–144 (NLRH…LFSL), 146–169 (HLVR…TNLT), 170–192 (KLKT…DLPL), and 194–215 (QFNV…RFES). A disordered region spans residues 234–260 (EETVPSQPTSGGNRTPPSVEGSEEKKK). Polar residues predominate over residues 237–249 (VPSQPTSGGNRTP). Residues 269–289 (IAGIVIGCVVGFALIVLILMV) form a helical membrane-spanning segment. Residues 371–646 (RASAEVLGKG…RKMENLRPYS (276 aa)) form the Protein kinase domain. Ser373 is modified (phosphoserine). 377–385 (LGKGTFGTA) lines the ATP pocket. Thr394 bears the Phosphothreonine mark. Position 399 (Lys399) interacts with ATP. Ser450 carries the phosphoserine modification. Thr526 is modified (phosphothreonine). Ser546 is modified (phosphoserine). Thr622 bears the Phosphothreonine mark.

This sequence belongs to the protein kinase superfamily. In terms of tissue distribution, highly expressed in seedlings and leaves. Lower expression in roots, stems, flowers and siliques. Detected in the vascular tissues of roots, in the trichomes of young rosettes leaves and hydathodes, in the floral abscission zones, in filament apex and stomata cells of anthers, in inflorescence stems and in sepals.

The protein resides in the cell membrane. This chain is Probable inactive receptor kinase At1g48480 (RKL1), found in Arabidopsis thaliana (Mouse-ear cress).